We begin with the raw amino-acid sequence, 129 residues long: Small ribosomal subunit protein uS8 (129 aa).

It belongs to the universal ribosomal protein uS8 family. Part of the 30S ribosomal subunit.

In terms of biological role, one of the primary rRNA binding proteins, it binds directly to 16S rRNA central domain where it helps coordinate assembly of the platform of the 30S subunit. The chain is Small ribosomal subunit protein uS8 from Methanothrix thermoacetophila (strain DSM 6194 / JCM 14653 / NBRC 101360 / PT) (Methanosaeta thermophila).